We begin with the raw amino-acid sequence, 38 residues long: Iota-conotoxin-like L11.5 (38 aa).

4 cysteine pairs are disulfide-bonded: Cys5-Cys19, Cys12-Cys24, Cys18-Cys29, and Cys23-Cys36.

The protein belongs to the conotoxin I1 superfamily. As to expression, expressed by the venom duct.

The protein localises to the secreted. Functionally, iota-conotoxins bind to voltage-gated sodium channels (Nav) and act as agonists by shifting the voltage-dependence of activation to more hyperpolarized levels. Produces general excitatory symptoms. The sequence is that of Iota-conotoxin-like L11.5 from Conus lynceus (Lynceus cone).